The sequence spans 292 residues: Inositol monophosphatase 2 (292 aa).

5 residues coordinate Mg(2+): glutamate 75, aspartate 94, isoleucine 96, aspartate 97, and aspartate 231. Substrate is bound at residue glutamate 75. Residues 96–99 (IDGT) and aspartate 231 contribute to the substrate site.

The protein belongs to the inositol monophosphatase superfamily. It depends on Mg(2+) as a cofactor.

The enzyme catalyses a myo-inositol phosphate + H2O = myo-inositol + phosphate. The protein operates within polyol metabolism; myo-inositol biosynthesis; myo-inositol from D-glucose 6-phosphate: step 2/2. With respect to regulation, inhibited by Li(+) and Na(+). In terms of biological role, responsible for the provision of inositol required for synthesis of phosphatidylinositol and polyphosphoinositides and involved in the inositol cycle of calcium signaling. This chain is Inositol monophosphatase 2 (INM2), found in Saccharomyces cerevisiae (strain ATCC 204508 / S288c) (Baker's yeast).